A 143-amino-acid polypeptide reads, in one-letter code: Transcriptional regulator MraZ (143 aa).

SpoVT-AbrB domains lie at 5–47 (EYQH…PQEE) and 76–119 (ASEC…SKSE).

The protein belongs to the MraZ family. In terms of assembly, forms oligomers.

It is found in the cytoplasm. It localises to the nucleoid. This Listeria welshimeri serovar 6b (strain ATCC 35897 / DSM 20650 / CCUG 15529 / CIP 8149 / NCTC 11857 / SLCC 5334 / V8) protein is Transcriptional regulator MraZ.